A 341-amino-acid chain; its full sequence is Glycerol-3-phosphate dehydrogenase [NAD(P)+] (341 aa).

S15, W16, R36, and K110 together coordinate NADPH. K110, G139, and S141 together coordinate sn-glycerol 3-phosphate. Position 143 (A143) interacts with NADPH. Positions 194, 247, 257, 258, and 259 each coordinate sn-glycerol 3-phosphate. K194 (proton acceptor) is an active-site residue. R258 contacts NADPH. The NADPH site is built by V282 and E284.

It belongs to the NAD-dependent glycerol-3-phosphate dehydrogenase family.

It is found in the cytoplasm. It catalyses the reaction sn-glycerol 3-phosphate + NAD(+) = dihydroxyacetone phosphate + NADH + H(+). It carries out the reaction sn-glycerol 3-phosphate + NADP(+) = dihydroxyacetone phosphate + NADPH + H(+). It participates in membrane lipid metabolism; glycerophospholipid metabolism. Its function is as follows. Catalyzes the reduction of the glycolytic intermediate dihydroxyacetone phosphate (DHAP) to sn-glycerol 3-phosphate (G3P), the key precursor for phospholipid synthesis. This chain is Glycerol-3-phosphate dehydrogenase [NAD(P)+], found in Xanthomonas campestris pv. campestris (strain 8004).